We begin with the raw amino-acid sequence, 76 residues long: DNA-directed RNA polymerase subunit epsilon (76 aa).

Belongs to the RNA polymerase subunit epsilon family. As to quaternary structure, RNAP is composed of a core of 2 alpha, a beta and a beta' subunit. The core is associated with a delta subunit, and at least one of epsilon or omega. When a sigma factor is associated with the core the holoenzyme is formed, which can initiate transcription.

The catalysed reaction is RNA(n) + a ribonucleoside 5'-triphosphate = RNA(n+1) + diphosphate. In terms of biological role, a non-essential component of RNA polymerase (RNAP). This Streptococcus sanguinis (strain SK36) protein is DNA-directed RNA polymerase subunit epsilon.